We begin with the raw amino-acid sequence, 483 residues long: ATP-dependent RNA helicase DDX25 (483 aa).

T49 is modified (phosphothreonine). Positions 61-74 match the Nuclear export signal motif; it reads LAANSLLNKLIRQS. The Q motif signature appears at 97–125; sequence KTFEELRLKEELLKGIYAMGFNRPSKIQE. Positions 100-114 match the Nuclear localization signal motif; that stretch reads EELRLKEELLKGIYA. Residues 130–300 enclose the Helicase ATP-binding domain; it reads MMLAHPPQNL…ERIIPDPNVI (171 aa). Residue 143–150 participates in ATP binding; sequence SQSGTGKT. The DEAD box motif lies at 247–250; it reads DEAD. The region spanning 311–478 is the Helicase C-terminal domain; it reads NIRQYYVLCE…QLDPEDMDEI (168 aa).

This sequence belongs to the DEAD box helicase family. In terms of processing, phosphorylated on threonine residues. The phosphorylated form is found in the cytoplasm but not in the nucleus. In terms of tissue distribution, isoform 1 is expressed in germ cells. Isoform 2 is highly expressed in Leydig cells and weakly expressed in the pituitary and hypothalamus. Isoform 3 is weakly expressed only in germ cells.

It is found in the cytoplasm. The protein localises to the nucleus. The enzyme catalyses ATP + H2O = ADP + phosphate + H(+). Functionally, ATP-dependent RNA helicase. Required for mRNA export and translation regulation during spermatid development. The protein is ATP-dependent RNA helicase DDX25 (Ddx25) of Rattus norvegicus (Rat).